A 96-amino-acid chain; its full sequence is CLAVATA3/ESR (CLE)-related protein 43 (96 aa).

The signal sequence occupies residues 1–28; the sequence is MGCRDILLTFSVALLLISLFQIWLFREG. The tract at residues 71–96 is disordered; it reads FGLNNTNSRFEDSNRRIPSSPDRLHN. N-linked (GlcNAc...) asparagine glycosylation occurs at Asn74. Residues Pro88 and Pro91 each carry the hydroxyproline modification. An O-linked (Ara...) hydroxyproline glycan is attached at Pro91.

It belongs to the CLV3/ESR signal peptide family. The O-glycosylation (arabinosylation) of the hydroxyproline Pro-91 enhances binding affinity of the CLE43p peptide for its receptor. As to expression, expressed at low levels in seedlings.

It is found in the secreted. The protein resides in the extracellular space. Functionally, extracellular signal peptide that regulates cell fate. Promotes pollen tube growth prolongation in a SKM1 and SKM2-dependent manner, especially under relatively high temperature (at 30 degrees Celsius), thus conferring tolerance against high temperature probably through the maintenance of mitochondrial activity. The sequence is that of CLAVATA3/ESR (CLE)-related protein 43 from Arabidopsis thaliana (Mouse-ear cress).